The following is a 314-amino-acid chain: Ornithine carbamoyltransferase (314 aa).

Carbamoyl phosphate is bound by residues 61 to 64, Q88, R112, and 139 to 142; these read STRT and HPCQ. L-ornithine-binding positions include N170, D234, and 238–239; that span reads SM. Residues 274 to 275 and R302 contribute to the carbamoyl phosphate site; that span reads CL.

Belongs to the aspartate/ornithine carbamoyltransferase superfamily. OTCase family.

The protein localises to the cytoplasm. It catalyses the reaction carbamoyl phosphate + L-ornithine = L-citrulline + phosphate + H(+). The protein operates within amino-acid biosynthesis; L-arginine biosynthesis; L-arginine from L-ornithine and carbamoyl phosphate: step 1/3. Reversibly catalyzes the transfer of the carbamoyl group from carbamoyl phosphate (CP) to the N(epsilon) atom of ornithine (ORN) to produce L-citrulline. This chain is Ornithine carbamoyltransferase, found in Anoxybacillus flavithermus (strain DSM 21510 / WK1).